A 392-amino-acid chain; its full sequence is Tryptophan synthase beta chain (392 aa).

Lysine 86 carries the N6-(pyridoxal phosphate)lysine modification.

The protein belongs to the TrpB family. As to quaternary structure, tetramer of two alpha and two beta chains. Pyridoxal 5'-phosphate serves as cofactor.

It carries out the reaction (1S,2R)-1-C-(indol-3-yl)glycerol 3-phosphate + L-serine = D-glyceraldehyde 3-phosphate + L-tryptophan + H2O. It participates in amino-acid biosynthesis; L-tryptophan biosynthesis; L-tryptophan from chorismate: step 5/5. In terms of biological role, the beta subunit is responsible for the synthesis of L-tryptophan from indole and L-serine. This is Tryptophan synthase beta chain (trpB) from Buchnera aphidicola subsp. Schlechtendalia chinensis.